Reading from the N-terminus, the 413-residue chain is Serine/threonine transporter SstT (413 aa).

The next 9 membrane-spanning stretches (helical) occupy residues 14–34, 44–64, 82–102, 141–161, 178–198, 217–237, 290–310, 330–350, and 356–376; these read GSLV…ASFS, LGTL…FILV, IVLL…VVSF, ALAS…GVAL, GVTF…FGLV, LMVL…LIVF, IPLG…VLTL, LVAA…LLLI, and LFGI…IIGV.

It belongs to the dicarboxylate/amino acid:cation symporter (DAACS) (TC 2.A.23) family.

The protein localises to the cell inner membrane. It carries out the reaction L-serine(in) + Na(+)(in) = L-serine(out) + Na(+)(out). The catalysed reaction is L-threonine(in) + Na(+)(in) = L-threonine(out) + Na(+)(out). Its function is as follows. Involved in the import of serine and threonine into the cell, with the concomitant import of sodium (symport system). The polypeptide is Serine/threonine transporter SstT (Edwardsiella ictaluri (strain 93-146)).